A 332-amino-acid polypeptide reads, in one-letter code: Leucine carboxyl methyltransferase 1 (332 aa).

Residues 1-23 (MAASLRRPSFTTCSSPTDTDDEG) form a disordered region. Residues R71, G96, D120, 169–170 (DL), and E196 each bind S-adenosyl-L-methionine.

The protein belongs to the methyltransferase superfamily. LCMT family.

It carries out the reaction [phosphatase 2A protein]-C-terminal L-leucine + S-adenosyl-L-methionine = [phosphatase 2A protein]-C-terminal L-leucine methyl ester + S-adenosyl-L-homocysteine. In terms of biological role, methylates the carboxyl group of the C-terminal leucine residue of protein phosphatase 2A catalytic subunits to form alpha-leucine ester residues. The sequence is that of Leucine carboxyl methyltransferase 1 (LCMT1) from Bos taurus (Bovine).